A 214-amino-acid polypeptide reads, in one-letter code: Probable transaldolase (214 aa).

Catalysis depends on lysine 83, which acts as the Schiff-base intermediate with substrate.

Belongs to the transaldolase family. Type 3B subfamily.

It is found in the cytoplasm. The catalysed reaction is D-sedoheptulose 7-phosphate + D-glyceraldehyde 3-phosphate = D-erythrose 4-phosphate + beta-D-fructose 6-phosphate. It participates in carbohydrate degradation; pentose phosphate pathway; D-glyceraldehyde 3-phosphate and beta-D-fructose 6-phosphate from D-ribose 5-phosphate and D-xylulose 5-phosphate (non-oxidative stage): step 2/3. Its function is as follows. Transaldolase is important for the balance of metabolites in the pentose-phosphate pathway. This Thermodesulfovibrio yellowstonii (strain ATCC 51303 / DSM 11347 / YP87) protein is Probable transaldolase.